The chain runs to 419 residues: Arginine biosynthesis bifunctional protein ArgJ (419 aa).

Positions 154, 180, 191, 277, 414, and 419 each coordinate substrate. T191 functions as the Nucleophile in the catalytic mechanism.

This sequence belongs to the ArgJ family. Heterotetramer of two alpha and two beta chains.

It localises to the cytoplasm. It catalyses the reaction N(2)-acetyl-L-ornithine + L-glutamate = N-acetyl-L-glutamate + L-ornithine. The catalysed reaction is L-glutamate + acetyl-CoA = N-acetyl-L-glutamate + CoA + H(+). It functions in the pathway amino-acid biosynthesis; L-arginine biosynthesis; L-ornithine and N-acetyl-L-glutamate from L-glutamate and N(2)-acetyl-L-ornithine (cyclic): step 1/1. It participates in amino-acid biosynthesis; L-arginine biosynthesis; N(2)-acetyl-L-ornithine from L-glutamate: step 1/4. Its function is as follows. Catalyzes two activities which are involved in the cyclic version of arginine biosynthesis: the synthesis of N-acetylglutamate from glutamate and acetyl-CoA as the acetyl donor, and of ornithine by transacetylation between N(2)-acetylornithine and glutamate. In Thermosynechococcus vestitus (strain NIES-2133 / IAM M-273 / BP-1), this protein is Arginine biosynthesis bifunctional protein ArgJ.